The primary structure comprises 265 residues: Metallo-beta-lactamase VIM-7 (265 aa).

The signal sequence occupies residues 1-17 (MFQIRSFLVGISAFVMA). Zn(2+) contacts are provided by histidine 113, histidine 115, aspartate 117, histidine 178, cysteine 197, and histidine 239.

This sequence belongs to the metallo-beta-lactamase superfamily. Class-B beta-lactamase family. In terms of assembly, monomer. It depends on Zn(2+) as a cofactor.

The protein localises to the periplasm. The catalysed reaction is a beta-lactam + H2O = a substituted beta-amino acid. Class B beta-lactamase which confers resistance to the beta-lactam antibiotics, including penicillins, cephalosporins and carbapenems. Acts via hydrolysis of the beta-lactam ring. Has penicillin-, cephalosporin- and carbapenem-hydrolyzing activities. In Pseudomonas aeruginosa, this protein is Metallo-beta-lactamase VIM-7.